Consider the following 372-residue polypeptide: 4-hydroxy-3-methylbut-2-en-1-yl diphosphate synthase (flavodoxin) (372 aa).

Residues C270, C273, C305, and E312 each coordinate [4Fe-4S] cluster.

It belongs to the IspG family. Requires [4Fe-4S] cluster as cofactor.

The enzyme catalyses (2E)-4-hydroxy-3-methylbut-2-enyl diphosphate + oxidized [flavodoxin] + H2O + 2 H(+) = 2-C-methyl-D-erythritol 2,4-cyclic diphosphate + reduced [flavodoxin]. It functions in the pathway isoprenoid biosynthesis; isopentenyl diphosphate biosynthesis via DXP pathway; isopentenyl diphosphate from 1-deoxy-D-xylulose 5-phosphate: step 5/6. In terms of biological role, converts 2C-methyl-D-erythritol 2,4-cyclodiphosphate (ME-2,4cPP) into 1-hydroxy-2-methyl-2-(E)-butenyl 4-diphosphate. The sequence is that of 4-hydroxy-3-methylbut-2-en-1-yl diphosphate synthase (flavodoxin) from Vibrio campbellii (strain ATCC BAA-1116).